Here is a 561-residue protein sequence, read N- to C-terminus: MKFGSFATFAADIEATDADLDVVALVAELFDAADSDLDVVARFVQGRVFPAHSETKLDIGPQLCYTALSRAAGRNVDADDIEARLAETGDIGAVAGSLDLGGQTGLAAFGGGDDHADGLTVSGVADELAALAAAAGDGSQSEKVTLLFGLFNQCTSREARYLARLVLGEMRIGVGEGAVRDAIAEAFDVPTAAVQRALQVSNDYGLVAETARDSGTDALDAMGLEVGRPVQAMLAQAGTVTDALDEWHEAAVETKFDGARVQVHYDGDDVVLYSRNMENVTGALPELVEFVENNVTAPVIIDGEAVAADEDGDPLPFQEILKRFRRKHDVAAMREEISVELHAFDCLHAPSADGGEDLLDAPFSDRHRRLRSVVDDASAVSEVLVTDDADEIAAFEATALEGGHEGIMLKNPAAPYTPGDRGKDWLKRKPDVETLDLVVTGAEWGEGRRASVLGTFLLSARDAAGDGFETIGKVATGLTDEELAALSDRLEPHVRSEDGQTVDIEPAVVLEVGYEEIQASPTYSSGYALRFPRFVSVREDKTPTTADTIERVERLAAQQQQ.

ATP is bound at residue E253. K255 acts as the N6-AMP-lysine intermediate in catalysis. ATP is bound by residues R260, R275, E304, F344, R421, and K427.

The protein belongs to the ATP-dependent DNA ligase family. Mg(2+) is required as a cofactor.

The enzyme catalyses ATP + (deoxyribonucleotide)n-3'-hydroxyl + 5'-phospho-(deoxyribonucleotide)m = (deoxyribonucleotide)n+m + AMP + diphosphate.. Its function is as follows. DNA ligase that seals nicks in double-stranded DNA during DNA replication, DNA recombination and DNA repair. The chain is DNA ligase from Halobacterium salinarum (strain ATCC 29341 / DSM 671 / R1).